The following is a 592-amino-acid chain: Catabolite repression protein creC (592 aa).

The interval 119–140 (NSALAAAPVKDPSKKRKPKNNI) is disordered. 4 WD repeats span residues 248-288 (INSS…ALFI), 327-368 (LANQ…DVFR), 369-408 (SYYGGFTCVCWSPDGKYIVTGGQDDLVTIWSLPERKIIAR), and 411-455 (GHDS…LHRP). Disordered regions lie at residues 459–513 (HQTS…HPVE) and 556–592 (WDRPRENISDNYGDQKSSETLGTGKEAGHPASSMGSL). Composition is skewed to polar residues over residues 484–499 (SSGNRMRSDSQRTAAD) and 564–576 (SDNYGDQKSSETL). One copy of the WD 5 repeat lies at 529–566 (VGEDPICWLGFQEDTIMTSSLEGHIRTWDRPRENISDN).

Belongs to the WD repeat creC family. In terms of assembly, interacts with creB.

Component of the regulatory network controlling carbon source utilization through ubiquitination and deubiquitination involving creA, creB, creC, creD and acrB. Required to prevent the proteolysis of the CreB deubiquitinating enzyme in the absence of carbon catabolite repression. CreB deubiquitinating enzyme stabilized in a complex with the CreC leads to the expression of genes such as those in the proline and quinate pathways. This is Catabolite repression protein creC (creC) from Emericella nidulans (strain FGSC A4 / ATCC 38163 / CBS 112.46 / NRRL 194 / M139) (Aspergillus nidulans).